Reading from the N-terminus, the 179-residue chain is MKKVFLCAILASLSYPAIASSLQDQLSAVAEAEQQGKNEEQRQHDEWVAERNREIQQEKQRRANAQAAANKRAATAAANKKARQDKLDAEASADKKRDQSYEDELRSLEIQKQKLALAKEEARVKRENEFIDQELKHKAAQTDVVQSEADANRNMTEGGRDLMKSVGKAEENKSDSWFN.

2 disordered regions span residues 26–103 and 136–179; these read LSAV…SYED and KHKA…SWFN. Over residues 34–61 the composition is skewed to basic and acidic residues; that stretch reads QQGKNEEQRQHDEWVAERNREIQQEKQR. Residues 63–79 are compositionally biased toward low complexity; sequence ANAQAAANKRAATAAAN. 2 stretches are compositionally biased toward basic and acidic residues: residues 82–103 and 158–179; these read ARQDKLDAEASADKKRDQSYED and GGRDLMKSVGKAEENKSDSWFN.

This is an uncharacterized protein from Escherichia coli (strain K12).